Reading from the N-terminus, the 379-residue chain is Wnt inhibitory factor 1 (379 aa).

The N-terminal stretch at 1-28 (MARRRAFPAFALRLWSILPCLLLLRADA) is a signal peptide. A WIF domain is found at 38–177 (LWIDAHQARV…PQNAIFFKTC (140 aa)). N-linked (GlcNAc...) asparagine glycosylation occurs at Asn88. 7 cysteine pairs are disulfide-bonded: Cys140–Cys177, Cys182–Cys192, Cys186–Cys198, Cys200–Cys209, Cys214–Cys224, Cys218–Cys230, and Cys232–Cys241. EGF-like domains lie at 178–210 (QQAE…PHCE), 211–242 (KALC…VNCD), 243–271 (KANC…LEGE), 274–306 (ELSK…DLCS), and 307–338 (KPVC…RHCN). Asn245 carries an N-linked (GlcNAc...) asparagine glycan. 8 disulfides stabilise this stretch: Cys246-Cys256, Cys250-Cys262, Cys278-Cys288, Cys282-Cys294, Cys296-Cys305, Cys310-Cys320, Cys314-Cys326, and Cys328-Cys337. The tract at residues 348–379 (APRPAGAGLERHTPSLKKAEDRRDPPESNYIW) is disordered. The span at 356–373 (LERHTPSLKKAEDRRDPP) shows a compositional bias: basic and acidic residues.

In terms of assembly, interacts with MYOC. As to expression, expression highest in heart and lung. Lower in brain and eye.

It localises to the secreted. Its function is as follows. Binds to WNT proteins and inhibits their activities. May be involved in mesoderm segmentation. This Mus musculus (Mouse) protein is Wnt inhibitory factor 1 (Wif1).